The primary structure comprises 860 residues: Spindle and centriole-associated protein 1 (860 aa).

Disordered stretches follow at residues 160–200, 232–254, and 293–330; these read ESVI…SQSN, QSQM…QKAA, and KQLL…SSSN. T236 carries the phosphothreonine modification. Over residues 236–249 the composition is skewed to low complexity; it reads TASSGTPSSASPSG. The span at 308–330 shows a compositional bias: polar residues; the sequence is PSKQKSSMLSASTASTDLPSSSN. The stretch at 383–437 forms a coiled coil; that stretch reads RYLKESELQLRKEVETRQRLEEALGDHRELIDALTAEVLFLREENTATQARLQQY. S646 is subject to Phosphoserine. Positions 729-755 form a coiled coil; sequence SSMEERIAELNRQSMEARGKLLQLIEQ. S765, S769, and S824 each carry phosphoserine. The interval 790-860 is disordered; sequence IPGAEAPESS…GWFALSTHVS (71 aa). Residues 808-824 are compositionally biased toward low complexity; sequence SGLNSRRSSGAASNSCS.

As to quaternary structure, interacts with CEP120.

Its subcellular location is the cytoplasm. It is found in the cytoskeleton. The protein localises to the microtubule organizing center. The protein resides in the centrosome. It localises to the centriole. Its subcellular location is the spindle. In terms of biological role, regulator required for centriole duplication. for proper bipolar spindle formation and chromosome congression in mitosis. This is Spindle and centriole-associated protein 1 (SPICE1) from Bos taurus (Bovine).